The primary structure comprises 95 residues: Co-chaperonin GroES (95 aa).

Belongs to the GroES chaperonin family. Heptamer of 7 subunits arranged in a ring. Interacts with the chaperonin GroEL.

The protein localises to the cytoplasm. Its function is as follows. Together with the chaperonin GroEL, plays an essential role in assisting protein folding. The GroEL-GroES system forms a nano-cage that allows encapsulation of the non-native substrate proteins and provides a physical environment optimized to promote and accelerate protein folding. GroES binds to the apical surface of the GroEL ring, thereby capping the opening of the GroEL channel. This Bordetella bronchiseptica (strain ATCC BAA-588 / NCTC 13252 / RB50) (Alcaligenes bronchisepticus) protein is Co-chaperonin GroES.